The sequence spans 309 residues: NAD kinase (309 aa).

Residue aspartate 89 is the Proton acceptor of the active site. NAD(+) contacts are provided by residues aspartate 89–glycine 90, asparagine 163–glutamate 164, histidine 174, arginine 191, aspartate 193, and threonine 204–serine 209.

It belongs to the NAD kinase family. Requires a divalent metal cation as cofactor.

It is found in the cytoplasm. It carries out the reaction NAD(+) + ATP = ADP + NADP(+) + H(+). Functionally, involved in the regulation of the intracellular balance of NAD and NADP, and is a key enzyme in the biosynthesis of NADP. Catalyzes specifically the phosphorylation on 2'-hydroxyl of the adenosine moiety of NAD to yield NADP. This chain is NAD kinase, found in Shewanella sp. (strain ANA-3).